The chain runs to 108 residues: Peptidyl-prolyl cis-trans isomerase FKBP1A (108 aa).

The 89-residue stretch at 20-108 (GQTCVVHYTG…VFDVELLKLE (89 aa)) folds into the PPIase FKBP-type domain. Lysine 53 is subject to N6-acetyllysine; alternate. Lysine 53 is modified (N6-succinyllysine; alternate).

Belongs to the FKBP-type PPIase family. FKBP1 subfamily. Interacts with TGFBR1; prevents TGFBR1 phosphorylation by TGFBR2 and stabilizes it in the inactive conformation. Interacts with ACVR1B and SMAD7. Identified in a complex composed of RYR1, PDE4D, PKA, FKBP1A and protein phosphatase 1 (PP1). Interacts directly with RYR2 and RYR3. Interacts with GLMN; rapamycin and FK506 abolish the interaction with GLMN in a dose dependent manner. Interacts directly with RYR1.

It is found in the cytoplasm. Its subcellular location is the cytosol. It localises to the sarcoplasmic reticulum membrane. It carries out the reaction [protein]-peptidylproline (omega=180) = [protein]-peptidylproline (omega=0). Inhibited by both FK506 and rapamycin. Keeps in an inactive conformation TGFBR1, the TGF-beta type I serine/threonine kinase receptor, preventing TGF-beta receptor activation in absence of ligand. Recruits SMAD7 to ACVR1B which prevents the association of SMAD2 and SMAD3 with the activin receptor complex, thereby blocking the activin signal. May modulate the RYR1 calcium channel activity. PPIases accelerate the folding of proteins. It catalyzes the cis-trans isomerization of proline imidic peptide bonds in oligopeptides. This Homo sapiens (Human) protein is Peptidyl-prolyl cis-trans isomerase FKBP1A (FKBP1A).